We begin with the raw amino-acid sequence, 82 residues long: Large ribosomal subunit protein bL27 (82 aa).

The segment at 1-20 is disordered; the sequence is MATKKAGGSSSNGRDSIGKR.

Belongs to the bacterial ribosomal protein bL27 family.

This is Large ribosomal subunit protein bL27 from Neorickettsia sennetsu (strain ATCC VR-367 / Miyayama) (Ehrlichia sennetsu).